Here is a 568-residue protein sequence, read N- to C-terminus: MSKKNSYDYVIIGGGSAGSVLGNRLTEDKDKEVLVLEAGRSDYPWDLFIQMPAALMFPSGNRFYDWIYQTEEEPHMGRKVDHARGKVLGGSSSINGMIYQRGNPMDYEGWAEPEGMESWDFAHCLPYFKRLEKTYGATPFDQFRGHHGPIKLKRGPATNPLFKSFFDAGVEAGYHKTKDVNGYRQEGFGPFDSQVHNGRRVSASRAYLHPAMKRKNLTVKTRAFVTKIHFDGNKATGVTFKRNGRYHTVDAGEVILSGGAFNTPQLLQLSGIGDAEFLKSKGIEPRMHLPGVGENFEDHLEVYIQHECKEPVSLQPSLDVKRMPWIGLQWIFARKGAAASNHFEGGAFVRSNNQVAYPNLMFHFLPIAVRYDGQKAPVAHGYQVHVGPMYSNSRGSLKIKSKDPFEKPSIVFNYLSTKEDEQEWVEAIRVARNILAQKAMDPYNGGEISPGPSVQTDEEILDWVRRDGETALHPSCSAKMGPASDPMSVVDPLTMKVHGMENLRVVDASAMPRTTNGNIHAPVLMLAEKAADIIRGKKPLEPQYVDYYKHGVSDENAGAMEFDPYYQH.

8 to 37 (DYVIIGGGSAGSVLGNRLTEDKDKEVLVLE) is a binding site for FAD. The active-site Proton acceptor is His-473.

Belongs to the GMC oxidoreductase family. The cofactor is FAD.

It catalyses the reaction choline + A = betaine aldehyde + AH2. The catalysed reaction is betaine aldehyde + NAD(+) + H2O = glycine betaine + NADH + 2 H(+). The protein operates within amine and polyamine biosynthesis; betaine biosynthesis via choline pathway; betaine aldehyde from choline (cytochrome c reductase route): step 1/1. Its function is as follows. Involved in the biosynthesis of the osmoprotectant glycine betaine. Catalyzes the oxidation of choline to betaine aldehyde and betaine aldehyde to glycine betaine at the same rate. In Staphylococcus haemolyticus (strain JCSC1435), this protein is Oxygen-dependent choline dehydrogenase.